Consider the following 464-residue polypeptide: tRNA modification GTPase MnmE (464 aa).

Residues R29, E91, and R131 each coordinate (6S)-5-formyl-5,6,7,8-tetrahydrofolate. The region spanning 226 to 387 is the TrmE-type G domain; the sequence is GLKVALTGKP…LINYLLKKCG (162 aa). Residue N236 coordinates K(+). Residues 236 to 241, 255 to 261, and 280 to 283 contribute to the GTP site; these read NVGKSS, TDLPGTT, and DTAG. Residue S240 participates in Mg(2+) binding. Positions 255, 257, and 260 each coordinate K(+). T261 is a binding site for Mg(2+). K464 is a binding site for (6S)-5-formyl-5,6,7,8-tetrahydrofolate.

The protein belongs to the TRAFAC class TrmE-Era-EngA-EngB-Septin-like GTPase superfamily. TrmE GTPase family. Homodimer. Heterotetramer of two MnmE and two MnmG subunits. Requires K(+) as cofactor.

It localises to the cytoplasm. In terms of biological role, exhibits a very high intrinsic GTPase hydrolysis rate. Involved in the addition of a carboxymethylaminomethyl (cmnm) group at the wobble position (U34) of certain tRNAs, forming tRNA-cmnm(5)s(2)U34. The sequence is that of tRNA modification GTPase MnmE from Prochlorococcus marinus (strain NATL2A).